The primary structure comprises 62 residues: Large ribosomal subunit protein uL29 (62 aa).

This sequence belongs to the universal ribosomal protein uL29 family.

This chain is Large ribosomal subunit protein uL29, found in Syntrophotalea carbinolica (strain DSM 2380 / NBRC 103641 / GraBd1) (Pelobacter carbinolicus).